The following is a 1450-amino-acid chain: M-protein, striated muscle (1450 aa).

Residues 66-87 (AHEAMQESRKRTHEQKSHASDE) form a disordered region. 2 Ig-like C2-type domains span residues 142–233 (PEIL…CAVV) and 254–359 (PLSY…AFLF). 5 Fibronectin type-III domains span residues 373-468 (APMD…ALDP), 501-596 (PPTN…PQDI), 602-695 (APGR…VQAA), 698-800 (CPSY…TMPE), and 803-900 (PAYD…ASPG). Ig-like C2-type domains lie at 899 to 995 (PGTK…LMTL), 1002 to 1115 (PTIP…FLRK), 1118 to 1204 (PHFS…LELS), 1225 to 1322 (PLKI…QRLK), and 1333 to 1422 (KVIG…VTVS).

Expressed in pectoralis and cardiac muscle.

Functionally, is a structural constituent of myofibrillar M-band in striated muscle. In Gallus gallus (Chicken), this protein is M-protein, striated muscle.